The following is a 217-amino-acid chain: DNA-binding transcriptional activator DevR/DosR (217 aa).

One can recognise a Response regulatory domain in the interval 3–119; the sequence is KVFLVDDHEV…ELARAVKDVG (117 aa). Position 54 is a 4-aspartylphosphate (Asp-54). The HTH luxR-type domain occupies 143 to 208; it reads KQDPLSGLTD…QAAVFATELK (66 aa). The segment at residues 167 to 186 is a DNA-binding region (H-T-H motif); it reads NKQIADRMFLAEKTVKNYVS. Residues Thr-198 and Thr-205 each carry the phosphothreonine; by PknH modification.

In terms of assembly, homodimer. Interacts with NarL. Post-translationally, phosphorylated on Asp-54 by both DevS (DosS) and DosT. Phosphorylated on Thr-198 and Thr-205 by PknH, which enhances DevR dimerization. Aspartate phosphorylation and threonine phosphorylation cooperatively enhance DevR binding to DNA.

The protein localises to the cytoplasm. It is found in the host cytoplasmic vesicle. It localises to the host phagosome. Member of the two-component regulatory system DevR/DevS (also called DosR/DosS) involved in onset of the dormancy response. Regulates an approximately 48-member regulon. When phosphorylated binds and activates the promoter of DevR regulon genes in response to hypoxia. The presence of target DNA increases stability of phospho-DevR in vitro. Activates its own transcription under hypoxic but not aerobic conditions, probably binds as a dimer to tandem binding sites within the devR and hspX promoters. Accepts a phosphate group from DevS (DosS) and from DosT. Does not regulate transcription of dosT. The chain is DNA-binding transcriptional activator DevR/DosR from Mycobacterium tuberculosis (strain ATCC 25618 / H37Rv).